The primary structure comprises 36 residues: GVSCKCGSKKGVYWFGQITGCPGGHGYKGSCSYVLG.

An intrachain disulfide couples C6 to C31.

It localises to the secreted. It is found in the nematocyst. The polypeptide is Toxin Bcg III 29.21 (Bunodosoma cangicum (Sea anemone)).